The following is a 284-amino-acid chain: MKLIIVSGRSGSGKSVALRVLEDLGYYCVDNIPINLLPALTHTVINDYENVAVSLDVRNLPKDPEDIPEIIAYLPKAVDVNTLFLDADDNDLIRRFSETRRLHPLIKENMALDQAIALEKSLLEPISTNADLYINTSQLSPHQLADLVRERILGKKTGSMVLVFESFGFKHGIPVDADYVFDARFLPNPFWEKSLKGQTGVDQEVKDFLASQAIVTKFIWQINSFMMTWLPHLERNNRSYVTIAIGCTGGKHRSVYIAEMLAKNFRKERDDIQTHHRDIDIKST.

Gly-8 to Ser-15 is a binding site for ATP. Residue Asp-56–Asn-59 participates in GTP binding.

Belongs to the RapZ-like family.

Displays ATPase and GTPase activities. In Colwellia psychrerythraea (strain 34H / ATCC BAA-681) (Vibrio psychroerythus), this protein is Nucleotide-binding protein CPS_4546.